A 266-amino-acid polypeptide reads, in one-letter code: DNA repair protein RecO (266 aa).

Belongs to the RecO family.

Its function is as follows. Involved in DNA repair and RecF pathway recombination. The polypeptide is DNA repair protein RecO (Synechococcus elongatus (strain ATCC 33912 / PCC 7942 / FACHB-805) (Anacystis nidulans R2)).